The sequence spans 296 residues: 33 kDa chaperonin (296 aa).

Disulfide bonds link C238–C240 and C271–C274.

It belongs to the HSP33 family. Under oxidizing conditions two disulfide bonds are formed involving the reactive cysteines. Under reducing conditions zinc is bound to the reactive cysteines and the protein is inactive.

The protein localises to the cytoplasm. In terms of biological role, redox regulated molecular chaperone. Protects both thermally unfolding and oxidatively damaged proteins from irreversible aggregation. Plays an important role in the bacterial defense system toward oxidative stress. This Clostridium botulinum (strain Okra / Type B1) protein is 33 kDa chaperonin.